We begin with the raw amino-acid sequence, 392 residues long: Protein SRL2 (392 aa).

Position 11 is a phosphoserine (Ser-11). The disordered stretch occupies residues 18–52 (KPSETPKMEEEKLEVTNVNASSSKKVHKSKKSTSK). Basic and acidic residues predominate over residues 21–31 (ETPKMEEEKLE). Positions 41–50 (KKVHKSKKST) are enriched in basic residues. Phosphoserine is present on Ser-139. A disordered region spans residues 284–303 (EDSTAVTNENGHISSEKNLK). Over residues 287–296 (TAVTNENGHI) the composition is skewed to polar residues.

It is found in the cytoplasm. The protein resides in the nucleus. This is Protein SRL2 (SRL2) from Saccharomyces cerevisiae (strain ATCC 204508 / S288c) (Baker's yeast).